The chain runs to 249 residues: Metallo-beta-lactamase type 2 (249 aa).

The N-terminal stretch at 1–22 (MLKKIKISLILALGLTSLQAFG) is a signal peptide. Residues His-98, His-100, Asp-102, His-161, and Cys-180 each contribute to the Zn(2+) site. Lys-183 provides a ligand contact to substrate. His-222 is a Zn(2+) binding site.

It belongs to the metallo-beta-lactamase superfamily. Class-B beta-lactamase family. As to quaternary structure, monomer. Requires Zn(2+) as cofactor.

Its subcellular location is the periplasm. The catalysed reaction is a beta-lactam + H2O = a substituted beta-amino acid. With respect to regulation, inhibited by chelating agents such as EDTA, 1-10 phenanthroline and pyridine-2,6-dicarboxylic acid. Confers resistance to the different beta-lactams antibiotics (penicillin, cephalosporin and carbapenem) via the hydrolysis of the beta-lactam ring. The chain is Metallo-beta-lactamase type 2 (blaB1) from Elizabethkingia meningoseptica (Chryseobacterium meningosepticum).